A 215-amino-acid polypeptide reads, in one-letter code: Pyrrolidone-carboxylate peptidase (215 aa).

Active-site residues include Glu-78, Cys-141, and His-165.

The protein belongs to the peptidase C15 family. In terms of assembly, homotetramer.

Its subcellular location is the cytoplasm. The enzyme catalyses Release of an N-terminal pyroglutamyl group from a polypeptide, the second amino acid generally not being Pro.. Its function is as follows. Removes 5-oxoproline from various penultimate amino acid residues except L-proline. The chain is Pyrrolidone-carboxylate peptidase from Streptococcus pyogenes serotype M18 (strain MGAS8232).